The sequence spans 245 residues: Probable transcriptional regulatory protein NSE_0641 (245 aa).

Positions 1-22 (MAGHSQYANIKHRKNAQDAKRA) are disordered.

Belongs to the TACO1 family.

The protein localises to the cytoplasm. The protein is Probable transcriptional regulatory protein NSE_0641 of Neorickettsia sennetsu (strain ATCC VR-367 / Miyayama) (Ehrlichia sennetsu).